We begin with the raw amino-acid sequence, 223 residues long: Sigma non-opioid intracellular receptor 1 (223 aa).

The Lumenal portion of the chain corresponds to M1–W9. Residues Q2–R8 form a targeting to endoplasmic reticulum-associated lipid droplets region. Residues A10 to L30 form a helical membrane-spanning segment. The Cytoplasmic portion of the chain corresponds to G31–S223. Residues S99 to L106 form an important for ligand-binding region. A C-terminal hydrophobic region region spans residues V177–S223.

This sequence belongs to the ERG2 family. As to quaternary structure, homotrimer. Forms a ternary complex with ANK2 and ITPR3. The complex is disrupted by agonists. Interacts with KCNA4. Interacts with KCNA2; cocaine consumption leads to increased interaction. Interacts with RNF112 in an oxidative stress-regulated manner.

It is found in the nucleus inner membrane. The protein localises to the nucleus outer membrane. It localises to the nucleus envelope. Its subcellular location is the cytoplasmic vesicle. The protein resides in the endoplasmic reticulum membrane. It is found in the membrane. The protein localises to the lipid droplet. It localises to the cell junction. Its subcellular location is the cell membrane. The protein resides in the cell projection. It is found in the growth cone. The protein localises to the postsynaptic density membrane. Functionally, functions in lipid transport from the endoplasmic reticulum and is involved in a wide array of cellular functions probably through regulation of the biogenesis of lipid microdomains at the plasma membrane. Involved in the regulation of different receptors it plays a role in BDNF signaling and EGF signaling. Also regulates ion channels like the potassium channel and could modulate neurotransmitter release. Plays a role in calcium signaling through modulation together with ANK2 of the ITP3R-dependent calcium efflux at the endoplasmic reticulum. Plays a role in several other cell functions including proliferation, survival and death. Originally identified for its ability to bind various psychoactive drugs it is involved in learning processes, memory and mood alteration. Necessary for proper mitochondrial axonal transport in motor neurons, in particular the retrograde movement of mitochondria. Plays a role in protecting cells against oxidative stress-induced cell death via its interaction with RNF112. This is Sigma non-opioid intracellular receptor 1 (SIGMAR1) from Trichosurus vulpecula (Brush-tailed possum).